A 190-amino-acid chain; its full sequence is Probable nicotinate-nucleotide adenylyltransferase (190 aa).

The protein belongs to the NadD family.

The enzyme catalyses nicotinate beta-D-ribonucleotide + ATP + H(+) = deamido-NAD(+) + diphosphate. The protein operates within cofactor biosynthesis; NAD(+) biosynthesis; deamido-NAD(+) from nicotinate D-ribonucleotide: step 1/1. Catalyzes the reversible adenylation of nicotinate mononucleotide (NaMN) to nicotinic acid adenine dinucleotide (NaAD). This is Probable nicotinate-nucleotide adenylyltransferase from Staphylococcus saprophyticus subsp. saprophyticus (strain ATCC 15305 / DSM 20229 / NCIMB 8711 / NCTC 7292 / S-41).